A 121-amino-acid chain; its full sequence is Large ribosomal subunit protein bL12 (121 aa).

This sequence belongs to the bacterial ribosomal protein bL12 family. In terms of assembly, homodimer. Part of the ribosomal stalk of the 50S ribosomal subunit. Forms a multimeric L10(L12)X complex, where L10 forms an elongated spine to which 2 to 4 L12 dimers bind in a sequential fashion. Binds GTP-bound translation factors.

Functionally, forms part of the ribosomal stalk which helps the ribosome interact with GTP-bound translation factors. Is thus essential for accurate translation. This chain is Large ribosomal subunit protein bL12, found in Streptococcus uberis (strain ATCC BAA-854 / 0140J).